A 162-amino-acid polypeptide reads, in one-letter code: Nucleotide-binding protein ABSDF0503 (162 aa).

The protein belongs to the YajQ family.

In terms of biological role, nucleotide-binding protein. The protein is Nucleotide-binding protein ABSDF0503 of Acinetobacter baumannii (strain SDF).